The primary structure comprises 245 residues: 1-(5-phosphoribosyl)-5-[(5-phosphoribosylamino)methylideneamino] imidazole-4-carboxamide isomerase (245 aa).

Asp7 acts as the Proton acceptor in catalysis. The active-site Proton donor is the Asp129.

This sequence belongs to the HisA/HisF family.

The protein localises to the cytoplasm. The enzyme catalyses 1-(5-phospho-beta-D-ribosyl)-5-[(5-phospho-beta-D-ribosylamino)methylideneamino]imidazole-4-carboxamide = 5-[(5-phospho-1-deoxy-D-ribulos-1-ylimino)methylamino]-1-(5-phospho-beta-D-ribosyl)imidazole-4-carboxamide. It functions in the pathway amino-acid biosynthesis; L-histidine biosynthesis; L-histidine from 5-phospho-alpha-D-ribose 1-diphosphate: step 4/9. The chain is 1-(5-phosphoribosyl)-5-[(5-phosphoribosylamino)methylideneamino] imidazole-4-carboxamide isomerase from Idiomarina loihiensis (strain ATCC BAA-735 / DSM 15497 / L2-TR).